The sequence spans 172 residues: Translationally-controlled tumor protein (172 aa).

Residues 1 to 172 form the TCTP domain; it reads MIIYRDLISH…FKDGLEMEKC (172 aa). A Phosphoserine; by PLK1 modification is found at Ser-46. At Ser-53 the chain carries Phosphoserine. At Ser-64 the chain carries Phosphoserine; by PLK1. The segment at 70 to 172 is required for reduction of TSC22D1 protein stability; sequence VDIVMNHHLQ…FKDGLEMEKC (103 aa).

The protein belongs to the TCTP family. In terms of assembly, homodimer. Interacts with STEAP3. Interacts with TSC22D1; interaction results in the destabilization of TSC22D1 protein.

It is found in the cytoplasm. In terms of biological role, involved in calcium binding and microtubule stabilization. Acts as a negative regulator of TSC22D1-mediated apoptosis, via interaction with and destabilization of TSC22D1 protein. In Oryctolagus cuniculus (Rabbit), this protein is Translationally-controlled tumor protein (TPT1).